Consider the following 494-residue polypeptide: Serine/arginine-rich splicing factor 4 (494 aa).

An RRM 1 domain is found at 2-72; the sequence is PRVYIGRLSY…ERVIVEHARG (71 aa). 2 disordered regions span residues 72 to 95 and 169 to 494; these read GPRR…GRDK and KIRL…HSRS. Residues serine 78 and serine 84 each carry the phosphoserine modification. Residues 104–177 enclose the RRM 2 domain; sequence YRLIVENLSS…RKIRLVEDKP (74 aa). Basic residues-rich tracts occupy residues 179 to 206 and 214 to 246; these read SRRR…KSRS and SHSK…KKEK. Residues 247–256 are compositionally biased toward basic and acidic residues; it reads SRSPSKEKSR. Residues 257 to 267 are compositionally biased toward basic residues; the sequence is SRSHSAGKSRS. Residues 268 to 278 are compositionally biased toward basic and acidic residues; the sequence is KSKDQAEEKIQ. Residues 286–302 show a composition bias toward basic residues; the sequence is PKSRSPSRHKSKSKSRS. Phosphoserine occurs at positions 288, 290, and 292. Residues 303 to 327 are compositionally biased toward basic and acidic residues; it reads RSQERRVEEEKRGSVSRGRSQEKSL. Basic residues-rich tracts occupy residues 328–359 and 367–382; these read RQSR…GRKR and RSRS…KRGS. Residues 411 to 431 are compositionally biased toward basic and acidic residues; sequence VSKEREHAKSESSQREGRGES. Serine 431, serine 446, serine 456, serine 458, and serine 460 each carry phosphoserine. The segment covering 449 to 460 has biased composition (low complexity); it reads KSKPNLPSESRS. A compositionally biased stretch (basic residues) spans 461–494; the sequence is RSKSASKTRSRSKSRSRSASRSPSRSRSRSHSRS.

Belongs to the splicing factor SR family. As to quaternary structure, found in a pre-mRNA splicing complex with SRSF4/SFRS4, SRSF5/SFRS5, SNRNP70, SNRPA1, SRRM1 and SRRM2. Interacts with PNN. Extensively phosphorylated on serine residues in the RS domain.

It localises to the nucleus speckle. Its function is as follows. Plays a role in alternative splice site selection during pre-mRNA splicing. Represses the splicing of MAPT/Tau exon 10. This is Serine/arginine-rich splicing factor 4 (SRSF4) from Homo sapiens (Human).